Consider the following 344-residue polypeptide: Methionine import ATP-binding protein MetN (344 aa).

The 240-residue stretch at 2 to 241 (IEINQVNKVF…PKTELAHDFI (240 aa)) folds into the ABC transporter domain. Residue 38-45 (GSSGAGKS) participates in ATP binding.

It belongs to the ABC transporter superfamily. Methionine importer (TC 3.A.1.24) family. As to quaternary structure, the complex is composed of two ATP-binding proteins (MetN), two transmembrane proteins (MetI) and a solute-binding protein (MetQ).

The protein localises to the cell inner membrane. It catalyses the reaction L-methionine(out) + ATP + H2O = L-methionine(in) + ADP + phosphate + H(+). It carries out the reaction D-methionine(out) + ATP + H2O = D-methionine(in) + ADP + phosphate + H(+). Part of the ABC transporter complex MetNIQ involved in methionine import. Responsible for energy coupling to the transport system. The sequence is that of Methionine import ATP-binding protein MetN from Vibrio vulnificus (strain CMCP6).